We begin with the raw amino-acid sequence, 248 residues long: ATP synthase subunit a, chloroplastic (248 aa).

5 helical membrane passes run 37–57 (AQVLITSWIVIAILLSLAVLA), 96–116 (VPFIGTMFLFIFVSNWSGALF), 135–155 (INTTVALALLTSVAYFYAGLH), 200–220 (LVVAVLISLVPLVVPIPMMFL), and 221–241 (GLFTSAIQALIFATLAAAYIG).

It belongs to the ATPase A chain family. In terms of assembly, F-type ATPases have 2 components, CF(1) - the catalytic core - and CF(0) - the membrane proton channel. CF(1) has five subunits: alpha(3), beta(3), gamma(1), delta(1), epsilon(1). CF(0) has four main subunits: a, b, b' and c.

The protein localises to the plastid. It is found in the chloroplast thylakoid membrane. Key component of the proton channel; it plays a direct role in the translocation of protons across the membrane. The polypeptide is ATP synthase subunit a, chloroplastic (Marchantia polymorpha (Common liverwort)).